A 158-amino-acid chain; its full sequence is NAD(P)H-quinone oxidoreductase subunit N (158 aa).

This sequence belongs to the complex I NdhN subunit family. As to quaternary structure, NDH-1 can be composed of about 15 different subunits; different subcomplexes with different compositions have been identified which probably have different functions.

It is found in the cellular thylakoid membrane. It carries out the reaction a plastoquinone + NADH + (n+1) H(+)(in) = a plastoquinol + NAD(+) + n H(+)(out). The catalysed reaction is a plastoquinone + NADPH + (n+1) H(+)(in) = a plastoquinol + NADP(+) + n H(+)(out). In terms of biological role, NDH-1 shuttles electrons from an unknown electron donor, via FMN and iron-sulfur (Fe-S) centers, to quinones in the respiratory and/or the photosynthetic chain. The immediate electron acceptor for the enzyme in this species is believed to be plastoquinone. Couples the redox reaction to proton translocation, and thus conserves the redox energy in a proton gradient. Cyanobacterial NDH-1 also plays a role in inorganic carbon-concentration. The chain is NAD(P)H-quinone oxidoreductase subunit N from Trichodesmium erythraeum (strain IMS101).